The primary structure comprises 80 residues: Beta-toxin KAaH1 (80 aa).

The signal sequence occupies residues 1 to 22 (MMKLMLFSIIVILFSLIGSIHG). The 56-residue stretch at 25–80 (VPGNYPLDSSDDTYLCAPLGENPFCIKICRKHGVKYGYCYAFQCWCEYLEDKNVKI) folds into the LCN-type CS-alpha/beta domain. 3 disulfide bridges follow: Cys40/Cys63, Cys49/Cys68, and Cys53/Cys70.

Belongs to the long (3 C-C) scorpion toxin superfamily. Sodium/Potassium channel inhibitor family. Expressed by the venom gland.

The protein localises to the secreted. Functionally, inhibits the vertebrate potassium channels Kv1.1/KCNA1 and Kv1.3/KCNA3 in vitro with an IC(50) of 5.3 nM and 50.0 nM respectively. The polypeptide is Beta-toxin KAaH1 (Androctonus australis (Sahara scorpion)).